A 362-amino-acid polypeptide reads, in one-letter code: Carbamoyl phosphate synthase small chain (362 aa).

The segment at 1–169 (MGKRLLILED…TKTAYPAPGV (169 aa)) is CPSase. Positions 46, 220, and 222 each coordinate L-glutamine. In terms of domain architecture, Glutamine amidotransferase type-1 spans 172–358 (NIVLVDFGLK…LELIDAFQLE (187 aa)). Catalysis depends on Cys-247, which acts as the Nucleophile. Met-248, Gln-251, Asn-289, Gly-291, and Tyr-292 together coordinate L-glutamine. Residues His-331 and Asp-333 contribute to the active site.

Belongs to the CarA family. As to quaternary structure, composed of two chains; the small (or glutamine) chain promotes the hydrolysis of glutamine to ammonia, which is used by the large (or ammonia) chain to synthesize carbamoyl phosphate. Tetramer of heterodimers (alpha,beta)4.

It catalyses the reaction hydrogencarbonate + L-glutamine + 2 ATP + H2O = carbamoyl phosphate + L-glutamate + 2 ADP + phosphate + 2 H(+). The enzyme catalyses L-glutamine + H2O = L-glutamate + NH4(+). It functions in the pathway amino-acid biosynthesis; L-arginine biosynthesis; carbamoyl phosphate from bicarbonate: step 1/1. Its pathway is pyrimidine metabolism; UMP biosynthesis via de novo pathway; (S)-dihydroorotate from bicarbonate: step 1/3. In terms of biological role, small subunit of the glutamine-dependent carbamoyl phosphate synthetase (CPSase). CPSase catalyzes the formation of carbamoyl phosphate from the ammonia moiety of glutamine, carbonate, and phosphate donated by ATP, constituting the first step of 2 biosynthetic pathways, one leading to arginine and/or urea and the other to pyrimidine nucleotides. The small subunit (glutamine amidotransferase) binds and cleaves glutamine to supply the large subunit with the substrate ammonia. The sequence is that of Carbamoyl phosphate synthase small chain from Streptococcus mutans serotype c (strain ATCC 700610 / UA159).